The chain runs to 225 residues: 2-C-methyl-D-erythritol 4-phosphate cytidylyltransferase (225 aa).

The protein belongs to the IspD/TarI cytidylyltransferase family. IspD subfamily.

It catalyses the reaction 2-C-methyl-D-erythritol 4-phosphate + CTP + H(+) = 4-CDP-2-C-methyl-D-erythritol + diphosphate. Its pathway is isoprenoid biosynthesis; isopentenyl diphosphate biosynthesis via DXP pathway; isopentenyl diphosphate from 1-deoxy-D-xylulose 5-phosphate: step 2/6. Catalyzes the formation of 4-diphosphocytidyl-2-C-methyl-D-erythritol from CTP and 2-C-methyl-D-erythritol 4-phosphate (MEP). The sequence is that of 2-C-methyl-D-erythritol 4-phosphate cytidylyltransferase from Chromobacterium violaceum (strain ATCC 12472 / DSM 30191 / JCM 1249 / CCUG 213 / NBRC 12614 / NCIMB 9131 / NCTC 9757 / MK).